A 113-amino-acid polypeptide reads, in one-letter code: Ribonuclease P protein component (113 aa).

This sequence belongs to the RnpA family. In terms of assembly, consists of a catalytic RNA component (M1 or rnpB) and a protein subunit.

The catalysed reaction is Endonucleolytic cleavage of RNA, removing 5'-extranucleotides from tRNA precursor.. In terms of biological role, RNaseP catalyzes the removal of the 5'-leader sequence from pre-tRNA to produce the mature 5'-terminus. It can also cleave other RNA substrates such as 4.5S RNA. The protein component plays an auxiliary but essential role in vivo by binding to the 5'-leader sequence and broadening the substrate specificity of the ribozyme. This Clostridium novyi (strain NT) protein is Ribonuclease P protein component.